We begin with the raw amino-acid sequence, 243 residues long: Urease accessory protein UreF (243 aa).

The protein belongs to the UreF family. UreD, UreF and UreG form a complex that acts as a GTP-hydrolysis-dependent molecular chaperone, activating the urease apoprotein by helping to assemble the nickel containing metallocenter of UreC. The UreE protein probably delivers the nickel.

It is found in the cytoplasm. Its function is as follows. Required for maturation of urease via the functional incorporation of the urease nickel metallocenter. The protein is Urease accessory protein UreF of Xanthobacter autotrophicus (strain ATCC BAA-1158 / Py2).